The chain runs to 103 residues: Isocitrate dehydrogenase [NAD] subunit beta, mitochondrial (103 aa).

Belongs to the isocitrate and isopropylmalate dehydrogenases family. In terms of assembly, heterooligomer of subunits alpha (IDH3A), beta (IDH3B), and gamma (IDH3G) in the apparent ratio of 2:1:1. The heterodimer containing one IDH3A and one IDH3B subunit and the heterodimer containing one IDH3A and one IDH3G subunit assemble into a heterotetramer (which contains two subunits of IDH3A, one of IDH3B and one of IDH3G) and further into the heterooctamer.

It localises to the mitochondrion. With respect to regulation, the heterotetramer and the heterodimer composed of IDH3A and IDH3G subunits can be allosterically activated by citrate (CIT) or/and ADP, and the two activators can act independently or synergistically. The heterodimer composed of IDH3A and IDH3B subunits cannot be allosterically regulated and the allosteric regulation of the heterotetramer is through the IDH3G subunit and not the IDH3B subunit. The IDH3G subunit contains the allosteric site which consists of a CIT-binding site and an ADP-binding site, and the binding of CIT and ADP causes conformational changes at the allosteric site which are transmitted to the active site in the catalytic subunit (IDH3A) through a cascade of conformational changes at the heterodimer interface, leading to stabilization of the isocitrate-binding at the active site and thus activation of the enzyme. ATP can activate the heterotetramer and the heterodimer composed of IDH3A and IDH3G subunits at low concentrations but inhibits their activities at high concentrations, whereas ATP exhibits only inhibitory effect on the heterodimer composed of IDH3A and IDH3B subunits. Its function is as follows. Plays a structural role to facilitate the assembly and ensure the full activity of the enzyme catalyzing the decarboxylation of isocitrate (ICT) into alpha-ketoglutarate. The heterodimer composed of the alpha (IDH3A) and beta (IDH3B) subunits and the heterodimer composed of the alpha (IDH3A) and gamma (IDH3G) subunits, have considerable basal activity but the full activity of the heterotetramer (containing two subunits of IDH3A, one of IDH3B and one of IDH3G) requires the assembly and cooperative function of both heterodimers. In Sus scrofa (Pig), this protein is Isocitrate dehydrogenase [NAD] subunit beta, mitochondrial (IDH3B).